Consider the following 378-residue polypeptide: Geraniol dehydrogenase (378 aa).

Residues Cys-48, His-75, Cys-105, Cys-108, Cys-111, Cys-119, and Cys-179 each coordinate Zn(2+).

Belongs to the zinc-containing alcohol dehydrogenase family. Monomer. Zn(2+) is required as a cofactor.

The enzyme catalyses (2E)-geraniol + NAD(+) = (2E)-geranial + NADH + H(+). It carries out the reaction (2E,6E)-farnesol + NAD(+) = (2E,6E)-farnesal + NADH + H(+). Its function is as follows. Catalyzes the NAD(+)-dependent oxidation of geraniol to geranial, playing an important role in the biosynthesis of neral, an alarm pheromone. Cannot use NADP(+). Also acts as a farnesol dehydrogenase by catalyzing the oxidation of (2E,6E)-farnesol to (2E,6E)-farnesal, with lower activity compared to geraniol dehydrogenase activity. The polypeptide is Geraniol dehydrogenase (Carpoglyphus lactis (Dried fruit mite)).